The following is a 102-amino-acid chain: Plastocyanin (102 aa).

Positions 1-102 constitute a Plastocyanin-like domain; the sequence is AKVEVGDEVG…ANMKGTLTVK (102 aa). Cu cation contacts are provided by histidine 37, cysteine 87, histidine 90, and methionine 95.

It belongs to the plastocyanin family. Cu(2+) serves as cofactor.

Its subcellular location is the plastid. The protein localises to the chloroplast thylakoid membrane. Functionally, participates in electron transfer between P700 and the cytochrome b6-f complex in photosystem I. The sequence is that of Plastocyanin (PETE) from Dryopteris crassirhizoma (Thick stemmed wood fern).